Reading from the N-terminus, the 96-residue chain is Large ribosomal subunit protein uL23 (96 aa).

The protein belongs to the universal ribosomal protein uL23 family. In terms of assembly, part of the 50S ribosomal subunit. Contacts protein L29, and trigger factor when it is bound to the ribosome.

One of the early assembly proteins it binds 23S rRNA. One of the proteins that surrounds the polypeptide exit tunnel on the outside of the ribosome. Forms the main docking site for trigger factor binding to the ribosome. This Halalkalibacterium halodurans (strain ATCC BAA-125 / DSM 18197 / FERM 7344 / JCM 9153 / C-125) (Bacillus halodurans) protein is Large ribosomal subunit protein uL23.